A 289-amino-acid polypeptide reads, in one-letter code: Glycerol facilitator-aquaporin gla (289 aa).

Helical transmembrane passes span I10–V30 and S41–G61. Positions N68 to A70 match the NPA 1 motif. A run of 3 helical transmembrane segments spans residues A87–V107, F151–S171, and M209–P229. An NPA 2 motif is present at residues N235–A237. The helical transmembrane segment at W264–F284 threads the bilayer.

The protein belongs to the MIP/aquaporin (TC 1.A.8) family.

Its subcellular location is the cell membrane. Its function is as follows. Mixed channel protein that transports both water and glycerol. The sequence is that of Glycerol facilitator-aquaporin gla (gla) from Lactococcus lactis subsp. cremoris (Streptococcus cremoris).